The chain runs to 206 residues: High frequency lysogenization protein HflD homolog (206 aa).

The protein belongs to the HflD family.

It localises to the cytoplasm. The protein localises to the cell inner membrane. The chain is High frequency lysogenization protein HflD homolog from Ectopseudomonas mendocina (strain ymp) (Pseudomonas mendocina).